A 447-amino-acid chain; its full sequence is GTPase Der (447 aa).

EngA-type G domains follow at residues 3–167 (PVIA…ALPE) and 180–353 (IRLA…KSAN). Residues 9-16 (GRPNVGKS), 56-60 (DTGGF), 119-122 (NKAE), 186-193 (GRPNVGKS), 233-237 (DTAGL), and 298-301 (NKWD) each bind GTP. The 85-residue stretch at 354–438 (RKMPTPVLTR…PLRIEMKTSS (85 aa)) folds into the KH-like domain.

Belongs to the TRAFAC class TrmE-Era-EngA-EngB-Septin-like GTPase superfamily. EngA (Der) GTPase family. In terms of assembly, associates with the 50S ribosomal subunit.

Functionally, GTPase that plays an essential role in the late steps of ribosome biogenesis. This chain is GTPase Der, found in Acidovorax ebreus (strain TPSY) (Diaphorobacter sp. (strain TPSY)).